The sequence spans 734 residues: Diacylglycerol kinase alpha (734 aa).

2 consecutive EF-hand domains span residues 109–144 and 154–189; these read RPED…MMRM and ELRP…TVPL. Ca(2+)-binding residues include Asp122, Asp124, Asn126, Glu133, Asp167, Asp169, Ser171, Ser173, and Glu178. 2 consecutive Phorbol-ester/DAG-type zinc fingers follow at residues 204–252 and 268–318; these read QHMW…ALPC and THVW…GHEC. The necessary and sufficient for the diacylglycerol kinase activity stretch occupies residues 358-505; it reads NLSTSEALRI…MDRWSVEVIP (148 aa). The 135-residue stretch at 371-505 folds into the DAGKc domain; it reads SNTHPLLVFV…MDRWSVEVIP (135 aa). Lys483 carries the post-translational modification N6-acetyllysine.

The protein belongs to the eukaryotic diacylglycerol kinase family. In terms of assembly, monomer.

The protein localises to the cytoplasm. It is found in the cytosol. It carries out the reaction a 1,2-diacyl-sn-glycerol + ATP = a 1,2-diacyl-sn-glycero-3-phosphate + ADP + H(+). The enzyme catalyses a 1-O-alkyl-sn-glycerol + ATP = a 1-O-alkyl-sn-glycero-3-phosphate + ADP + H(+). The catalysed reaction is 1-O-alkyl-2-acyl-sn-glycerol + ATP = 1-O-alkyl-2-acyl-sn-glycero-3-phosphate + ADP + H(+). It catalyses the reaction 1,2-dihexadecanoyl-sn-glycerol + ATP = 1,2-dihexadecanoyl-sn-glycero-3-phosphate + ADP + H(+). It carries out the reaction 1-hexadecanoyl-2-(9Z-octadecenoyl)-sn-glycerol + ATP = 1-hexadecanoyl-2-(9Z-octadecenoyl)-sn-glycero-3-phosphate + ADP + H(+). The enzyme catalyses 2-(9Z-octadecenoyl)-glycerol + ATP = 2-(9Z-octadecenoyl)-sn-glycero-3-phosphate + ADP + H(+). The catalysed reaction is 1,2-di-(9Z-octadecenoyl)-sn-glycerol + ATP = 1,2-di-(9Z-octadecenoyl)-sn-glycero-3-phosphate + ADP + H(+). It catalyses the reaction 1-octadecanoyl-2-(5Z,8Z,11Z,14Z-eicosatetraenoyl)-sn-glycerol + ATP = 1-octadecanoyl-2-(5Z,8Z,11Z,14Z-eicosatetraenoyl)-sn-glycero-3-phosphate + ADP + H(+). It carries out the reaction 1,2-didecanoyl-sn-glycerol + ATP = 1,2-didecanoyl-sn-glycero-3-phosphate + ADP + H(+). The enzyme catalyses 1-O-hexadecyl-2-acetyl-sn-glycerol + ATP = 1-O-hexadecyl-2-acetyl-sn-glycero-3-phosphate + ADP + H(+). The catalysed reaction is 1-O-hexadecyl-2-(5Z,8Z,11Z,14Z-eicosatetraenoyl)-sn-glycerol + ATP = 1-O-hexadecyl-2-(5Z,8Z,11Z,14Z-eicosatetraenoyl)-sn-glycero-3-phosphate + ADP + H(+). It catalyses the reaction 1-O-hexadecyl-2-(9Z-octadecenoyl)-sn-glycerol + ATP = 1-O-hexadecyl-2-(9Z-octadecenoyl)-sn-glycero-3-phosphate + ADP + H(+). It carries out the reaction 1-O-hexadecyl-sn-glycerol + ATP = 1-O-hexadecyl-sn-glycero-3-phosphate + ADP + H(+). The protein operates within lipid metabolism; glycerolipid metabolism. With respect to regulation, stimulated by calcium and phosphatidylserine. Diacylglycerol kinase that converts diacylglycerol/DAG into phosphatidic acid/phosphatidate/PA and regulates the respective levels of these two bioactive lipids. Thereby, acts as a central switch between the signaling pathways activated by these second messengers with different cellular targets and opposite effects in numerous biological processes. Also plays an important role in the biosynthesis of complex lipids. Can also phosphorylate 1-alkyl-2-acylglycerol in vitro as efficiently as diacylglycerol provided it contains an arachidonoyl group. Also involved in the production of alkyl-lysophosphatidic acid, another bioactive lipid, through the phosphorylation of 1-alkyl-2-acetyl glycerol. In Sus scrofa (Pig), this protein is Diacylglycerol kinase alpha (DGKA).